Reading from the N-terminus, the 225-residue chain is MESVVLLLAFISLVCGYVIDPCTPQERSTWHVSIKLCIRVQEYKISSRGCRLTQGPGGLIATGNGFKIFAYDECGHDEHSFLLTNIRESVYASGHGMYAEISNNVTYLDLVSPCARNITIIVSCDDITINAYGKNIDELHPDVTITTLIDTSCVRGHSFAYSINTLCTERLSGESCEQLACQAIKGSQHENYLKACELNAPEQYMFKEYKPHQRPHVAKVLRDEL.

The protein belongs to the poxviruses B9 family.

This chain is T4 protein, found in Rabbit fibroma virus (strain Kasza) (RFV).